The primary structure comprises 442 residues: Glutamyl-tRNA reductase (442 aa).

Substrate-binding positions include 49-52 (TCNR), Ser109, 114-116 (ESQ), and Gln120. The active-site Nucleophile is the Cys50. 189 to 194 (GAGAMS) serves as a coordination point for NADP(+).

It belongs to the glutamyl-tRNA reductase family. Homodimer.

It catalyses the reaction (S)-4-amino-5-oxopentanoate + tRNA(Glu) + NADP(+) = L-glutamyl-tRNA(Glu) + NADPH + H(+). Its pathway is porphyrin-containing compound metabolism; protoporphyrin-IX biosynthesis; 5-aminolevulinate from L-glutamyl-tRNA(Glu): step 1/2. Functionally, catalyzes the NADPH-dependent reduction of glutamyl-tRNA(Glu) to glutamate 1-semialdehyde (GSA). This chain is Glutamyl-tRNA reductase, found in Kineococcus radiotolerans (strain ATCC BAA-149 / DSM 14245 / SRS30216).